Here is a 358-residue protein sequence, read N- to C-terminus: L-lysine 3-hydroxylase (358 aa).

Fe cation-binding residues include histidine 178, glutamate 180, and histidine 314. Arginine 328 contacts 2-oxoglutarate.

It belongs to the clavaminate synthase family. Requires Fe(2+) as cofactor.

The enzyme catalyses L-lysine + 2-oxoglutarate + O2 = (3S)-3-hydroxy-L-lysine + succinate + CO2. Alpha-ketoglutarate-dependent dioxygenase that in vitro catalyzes the regio- and stereoselective hydroxylation of L-lysine, leading to (3S)-3-hydroxy-L-lysine. Can also use (5R)-5-hydroxy-L-lysine as substrate, but neither D-lysine nor L-ornithine. The polypeptide is L-lysine 3-hydroxylase (Catenulispora acidiphila (strain DSM 44928 / JCM 14897 / NBRC 102108 / NRRL B-24433 / ID139908)).